The primary structure comprises 35 residues: Dermonecrotic toxin LdSicTox-alpha-1 (35 aa).

Residue His11 is part of the active site. 2 residues coordinate Mg(2+): Glu31 and Asp33.

It belongs to the arthropod phospholipase D family. Class I subfamily. Mg(2+) serves as cofactor. In terms of processing, contains 1 disulfide bond. As to expression, expressed by the venom gland.

The protein resides in the secreted. It carries out the reaction an N-(acyl)-sphingosylphosphocholine = an N-(acyl)-sphingosyl-1,3-cyclic phosphate + choline. The enzyme catalyses an N-(acyl)-sphingosylphosphoethanolamine = an N-(acyl)-sphingosyl-1,3-cyclic phosphate + ethanolamine. It catalyses the reaction a 1-acyl-sn-glycero-3-phosphocholine = a 1-acyl-sn-glycero-2,3-cyclic phosphate + choline. The catalysed reaction is a 1-acyl-sn-glycero-3-phosphoethanolamine = a 1-acyl-sn-glycero-2,3-cyclic phosphate + ethanolamine. Its function is as follows. Dermonecrotic toxins cleave the phosphodiester linkage between the phosphate and headgroup of certain phospholipids (sphingolipid and lysolipid substrates), forming an alcohol (often choline) and a cyclic phosphate. This toxin acts on sphingomyelin (SM). It may also act on ceramide phosphoethanolamine (CPE), lysophosphatidylcholine (LPC) and lysophosphatidylethanolamine (LPE), but not on lysophosphatidylserine (LPS), and lysophosphatidylglycerol (LPG). It acts by transphosphatidylation, releasing exclusively cyclic phosphate products as second products. Induces dermonecrosis, hemolysis, increased vascular permeability, edema, inflammatory response, and platelet aggregation. In Loxosceles deserta (Desert recluse spider), this protein is Dermonecrotic toxin LdSicTox-alpha-1.